A 53-amino-acid polypeptide reads, in one-letter code: UPF0391 membrane protein PSEEN0090 (53 aa).

2 helical membrane-spanning segments follow: residues 4–24 and 29–49; these read WAIT…GGIA and GIAK…FFFG.

It belongs to the UPF0391 family.

The protein resides in the cell membrane. The protein is UPF0391 membrane protein PSEEN0090 of Pseudomonas entomophila (strain L48).